Here is a 404-residue protein sequence, read N- to C-terminus: Glucose-1-phosphate adenylyltransferase (404 aa).

Alpha-D-glucose 1-phosphate is bound by residues Tyr-99, Gly-164, 179–180 (EK), and Ser-197.

The protein belongs to the bacterial/plant glucose-1-phosphate adenylyltransferase family.

The enzyme catalyses alpha-D-glucose 1-phosphate + ATP + H(+) = ADP-alpha-D-glucose + diphosphate. It functions in the pathway capsule biogenesis; capsule polysaccharide biosynthesis. The protein operates within glycan biosynthesis; glycogen biosynthesis. Involved in the biosynthesis of ADP-glucose, a building block, required in the biosynthesis of maltose-1-phosphate (M1P) and in the elongation reactions to produce linear alpha-1,4-glucans. Catalyzes the reaction between ATP and alpha-D-glucose 1-phosphate (G1P) to produce pyrophosphate and ADP-Glc. The polypeptide is Glucose-1-phosphate adenylyltransferase (Mycobacterium ulcerans (strain Agy99)).